The chain runs to 478 residues: Amino acid oxidase imqH (478 aa).

Residues 1 to 22 (MPAPKSIIIVGSGVFGLSTAHA) form the signal peptide. FAD-binding residues include V14, F15, D38, N53, A57, N58, R63, and I64. 2 N-linked (GlcNAc...) asparagine glycosylation sites follow: N97 and N167. V208 is an FAD binding site. C399 bears the S-8alpha-FAD cysteine mark. FAD-binding residues include F432 and K433.

The protein belongs to the MSOX/MTOX family. As to quaternary structure, dimer. The cofactor is FAD.

The protein operates within secondary metabolite biosynthesis. Its function is as follows. Nonribosomal peptide synthetase; part of the gene cluster that mediates the biosynthesis of imizoquins A to D, tripeptide-derived alkaloids that serve a protective role against oxidative stress that are essential for normal germination. ImqB is a canonical three-module NRPS that assembles the tripeptide backbone of the imizoquins via condensation of Trp, Tyr, and Leu-derived precursors. N-methylation by imqF and phenol oxidation by imqC, followed by cyclization via the FAD-dependent oxidase imqH carry out the three-step transformation of L-tyrosine into tetrahydroisoquinoline. Importantly, this sequence requires the presence of a free amine in the tyrosine moiety, indicating that isoquinoline formation occurs prior to peptide bond formation. The imidazolidin-4-one ring of imizoquins could form following additional oxidation of the methyl-derived bridgehead carbon by imqH. Lastly, O-methylation by imqG and leucine hydroxylation by imqE complete biosynthesis of the imizoquins. The chain is Amino acid oxidase imqH from Aspergillus flavus (strain ATCC 200026 / FGSC A1120 / IAM 13836 / NRRL 3357 / JCM 12722 / SRRC 167).